The chain runs to 85 residues: ATP synthase subunit c (85 aa).

2 helical membrane-spanning segments follow: residues 10–30 (IAVALLIGLGALGTAIGFGLL) and 53–73 (FIVAGLLDAVTMIGVGIALFF).

It belongs to the ATPase C chain family. F-type ATPases have 2 components, F(1) - the catalytic core - and F(0) - the membrane proton channel. F(1) has five subunits: alpha(3), beta(3), gamma(1), delta(1), epsilon(1). F(0) has three main subunits: a(1), b(2) and c(10-14). The alpha and beta chains form an alternating ring which encloses part of the gamma chain. F(1) is attached to F(0) by a central stalk formed by the gamma and epsilon chains, while a peripheral stalk is formed by the delta and b chains.

It is found in the cell inner membrane. F(1)F(0) ATP synthase produces ATP from ADP in the presence of a proton or sodium gradient. F-type ATPases consist of two structural domains, F(1) containing the extramembraneous catalytic core and F(0) containing the membrane proton channel, linked together by a central stalk and a peripheral stalk. During catalysis, ATP synthesis in the catalytic domain of F(1) is coupled via a rotary mechanism of the central stalk subunits to proton translocation. In terms of biological role, key component of the F(0) channel; it plays a direct role in translocation across the membrane. A homomeric c-ring of between 10-14 subunits forms the central stalk rotor element with the F(1) delta and epsilon subunits. The sequence is that of ATP synthase subunit c from Pseudomonas aeruginosa (strain LESB58).